We begin with the raw amino-acid sequence, 340 residues long: Anthranilate phosphoribosyltransferase (340 aa).

5-phospho-alpha-D-ribose 1-diphosphate contacts are provided by residues glycine 82, 85 to 86, threonine 90, 92 to 95, 110 to 118, and alanine 122; these read GD, NISS, and KHGGRSVSS. Anthranilate is bound at residue glycine 82. Serine 94 contributes to the Mg(2+) binding site. Arginine 168 serves as a coordination point for anthranilate. Mg(2+)-binding residues include aspartate 227 and glutamate 228.

This sequence belongs to the anthranilate phosphoribosyltransferase family. In terms of assembly, homodimer. The cofactor is Mg(2+).

It carries out the reaction N-(5-phospho-beta-D-ribosyl)anthranilate + diphosphate = 5-phospho-alpha-D-ribose 1-diphosphate + anthranilate. Its pathway is amino-acid biosynthesis; L-tryptophan biosynthesis; L-tryptophan from chorismate: step 2/5. Its function is as follows. Catalyzes the transfer of the phosphoribosyl group of 5-phosphorylribose-1-pyrophosphate (PRPP) to anthranilate to yield N-(5'-phosphoribosyl)-anthranilate (PRA). The chain is Anthranilate phosphoribosyltransferase from Dechloromonas aromatica (strain RCB).